The sequence spans 29 residues: Cytochrome b6-f complex subunit 8 (29 aa).

The helical transmembrane segment at I3–V23 threads the bilayer.

Belongs to the PetN family. The 4 large subunits of the cytochrome b6-f complex are cytochrome b6, subunit IV (17 kDa polypeptide, PetD), cytochrome f and the Rieske protein, while the 4 small subunits are PetG, PetL, PetM and PetN. The complex functions as a dimer.

Its subcellular location is the plastid. It localises to the chloroplast thylakoid membrane. Functionally, component of the cytochrome b6-f complex, which mediates electron transfer between photosystem II (PSII) and photosystem I (PSI), cyclic electron flow around PSI, and state transitions. In Chara vulgaris (Common stonewort), this protein is Cytochrome b6-f complex subunit 8.